We begin with the raw amino-acid sequence, 692 residues long: Mitogen-activated protein kinase kinase kinase 7-interacting protein 3 homolog (692 aa).

One can recognise a CUE domain in the interval 8 to 51 (LDIQVLNDLQQRFPEIPRDVVSQCMLQNNSNLDACYRALTQESC). 3 disordered regions span residues 138–159 (NDQN…GVGT), 206–333 (YGTP…PYGP), and 349–427 (SQQR…VVMS). Composition is skewed to polar residues over residues 215 to 230 (PSQN…NTAW), 249 to 298 (QSFQ…QTSH), and 349 to 387 (SQQR…SGSP). Residues 409–422 (SQPPTTTGSPTPSS) are compositionally biased toward low complexity. Residues 496 to 580 (ALLLHQRARM…QKEIDLLQSR (85 aa)) are a coiled coil. Residues 598–662 (SPGPAVPPNT…SPRPGRDEDF (65 aa)) form a disordered region. Residues 608–620 (CKKESSETTSGER) are compositionally biased toward basic and acidic residues. The segment at 662–692 (FEGSPWNCNSCTFLNHPALNRCEQCEMPRFT) adopts a RanBP2-type zinc-finger fold.

Functionally, may play a role in signaling pathway. This chain is Mitogen-activated protein kinase kinase kinase 7-interacting protein 3 homolog (map3k7ip3), found in Xenopus laevis (African clawed frog).